A 255-amino-acid chain; its full sequence is Hydroxyacylglutathione hydrolase (255 aa).

Residues H56, H58, D60, H61, H114, D133, and H171 each contribute to the Zn(2+) site.

The protein belongs to the metallo-beta-lactamase superfamily. Glyoxalase II family. As to quaternary structure, monomer. Zn(2+) serves as cofactor.

The enzyme catalyses an S-(2-hydroxyacyl)glutathione + H2O = a 2-hydroxy carboxylate + glutathione + H(+). The protein operates within secondary metabolite metabolism; methylglyoxal degradation; (R)-lactate from methylglyoxal: step 2/2. Its function is as follows. Thiolesterase that catalyzes the hydrolysis of S-D-lactoyl-glutathione to form glutathione and D-lactic acid. This chain is Hydroxyacylglutathione hydrolase, found in Mesorhizobium japonicum (strain LMG 29417 / CECT 9101 / MAFF 303099) (Mesorhizobium loti (strain MAFF 303099)).